The sequence spans 780 residues: Vacuolar protein sorting-associated protein 51 homolog (780 aa).

Alanine 2 carries the N-acetylalanine modification. Disordered stretches follow at residues 270 to 292 and 615 to 651; these read STLV…PAKI and QGTF…SNSQ. The span at 273 to 284 shows a compositional bias: acidic residues; sequence VEDDDSSNDTES. Positions 626 to 639 are enriched in low complexity; the sequence is SNGSNTTTSSRSNT.

It belongs to the VPS51 family. In terms of assembly, component of the Golgi-associated retrograde protein (GARP) complex, composed by VPS51, VPS52, VPS53 and VPS54. Component of the endosome-associated retrograde protein (EARP) complex, composed of VPS51, VPS52, VPS53 and VPS50. Interacts with VPS52. As to expression, expressed in primary and lateral roots, shoots of seedlings and flowers.

It localises to the golgi apparatus. It is found in the trans-Golgi network. The protein localises to the recycling endosome. Its subcellular location is the prevacuolar compartment. Its function is as follows. Acts as a component of the GARP complex that is involved in retrograde transport from early and late endosomes to the trans-Golgi network (TGN). The GARP complex is required for the maintenance of protein retrieval from endosomes to the TGN, acid hydrolase sorting, lysosome function, endosomal cholesterol traffic and autophagy. VPS51 participates in retrograde transport of acid hydrolase receptors, likely by promoting tethering and SNARE-dependent fusion of endosome-derived carriers to the TGN. Acts as a component of the EARP complex that is involved in endocytic recycling. The EARP complex associates with Rab4-positive endosomes and promotes recycling of internalized transferrin receptor (TFRC) to the plasma membrane. Required for vacuolar targeting and cellular trafficking. Involved in the regulation of vascular tissue patterning, probably by regulating PIN1 expression pattern, thus modulating auxin flux. Important to prevent PIN1 accumulation within margin cells, possibly by targeting PIN1 to the lytic vacuole. Regulates PIN1 and ATHB8 expression pattern in secondary veins. The sequence is that of Vacuolar protein sorting-associated protein 51 homolog from Arabidopsis thaliana (Mouse-ear cress).